The sequence spans 199 residues: Pyridoxal 5'-phosphate synthase subunit PdxT (199 aa).

Residue Gly49–Ser51 participates in L-glutamine binding. Catalysis depends on Cys81, which acts as the Nucleophile. Residues Arg110 and Ile139–Arg140 each bind L-glutamine. Active-site charge relay system residues include His175 and Glu177.

It belongs to the glutaminase PdxT/SNO family. In terms of assembly, in the presence of PdxS, forms a dodecamer of heterodimers. Only shows activity in the heterodimer.

It catalyses the reaction aldehydo-D-ribose 5-phosphate + D-glyceraldehyde 3-phosphate + L-glutamine = pyridoxal 5'-phosphate + L-glutamate + phosphate + 3 H2O + H(+). The enzyme catalyses L-glutamine + H2O = L-glutamate + NH4(+). Its pathway is cofactor biosynthesis; pyridoxal 5'-phosphate biosynthesis. Its function is as follows. Catalyzes the hydrolysis of glutamine to glutamate and ammonia as part of the biosynthesis of pyridoxal 5'-phosphate. The resulting ammonia molecule is channeled to the active site of PdxS. The chain is Pyridoxal 5'-phosphate synthase subunit PdxT from Frankia alni (strain DSM 45986 / CECT 9034 / ACN14a).